Here is a 321-residue protein sequence, read N- to C-terminus: Annexin A5 (321 aa).

Annexin repeat units lie at residues 15 to 86, 87 to 158, 170 to 242, and 246 to 317; these read FDAR…SLMR, PARI…VLLQ, ALVE…AVVK, and SVPA…LLCG.

It belongs to the annexin family.

In terms of biological role, collagen-binding protein. The polypeptide is Annexin A5 (ANXA5) (Gallus gallus (Chicken)).